We begin with the raw amino-acid sequence, 365 residues long: Elongation factor Tu (365 aa).

Residues 1-7 (HVDHGKT), 62-66 (DCPGH), and 117-120 (NKCD) contribute to the GTP site. Residues 1–185 (HVDHGKTTLT…TLDSYIPTPE (185 aa)) form the tr-type G domain. Mg(2+) is bound at residue Thr7.

It belongs to the TRAFAC class translation factor GTPase superfamily. Classic translation factor GTPase family. EF-Tu/EF-1A subfamily. In terms of assembly, monomer.

It localises to the cytoplasm. It carries out the reaction GTP + H2O = GDP + phosphate + H(+). GTP hydrolase that promotes the GTP-dependent binding of aminoacyl-tRNA to the A-site of ribosomes during protein biosynthesis. This is Elongation factor Tu from Buchnera aphidicola subsp. Schlechtendalia chinensis.